We begin with the raw amino-acid sequence, 358 residues long: 2'-5'-oligoadenylate synthase 1A (358 aa).

The interval Asp-14–Lys-61 is interaction with dsRNA. An ATP-binding site is contributed by Ser-64. Asp-76, Asp-78, and Asp-149 together coordinate Mg(2+). The segment at Gln-201 to Arg-211 is interaction with dsRNA. The ATP site is built by Arg-211, Lys-214, and Gln-231.

This sequence belongs to the 2-5A synthase family. Monomer. Homotetramer. Interacts with OAS1D. It depends on Mg(2+) as a cofactor.

The protein localises to the cytoplasm. It localises to the mitochondrion. Its subcellular location is the nucleus. It is found in the microsome. The protein resides in the endoplasmic reticulum. The enzyme catalyses 3 ATP = 5'-triphosphoadenylyl-(2'-&gt;5')-adenylyl-(2'-&gt;5')-adenosine + 2 diphosphate. Its activity is regulated as follows. Produced as a latent enzyme which is activated by dsRNA generated during the course of viral infection. The dsRNA activator must be at least 15 nucleotides long, and no modification of the 2'-hydroxyl group is tolerated. ssRNA or dsDNA do not act as activators. Its function is as follows. Interferon-induced, dsRNA-activated antiviral enzyme which plays a critical role in cellular innate antiviral response. In addition, it may also play a role in other cellular processes such as apoptosis, cell growth, differentiation and gene regulation. Synthesizes higher oligomers of 2'-5'-oligoadenylates (2-5A) from ATP which then bind to the inactive monomeric form of ribonuclease L (RNase L) leading to its dimerization and subsequent activation. Activation of RNase L leads to degradation of cellular as well as viral RNA, resulting in the inhibition of protein synthesis, thus terminating viral replication. Can mediate the antiviral effect via the classical RNase L-dependent pathway or an alternative antiviral pathway independent of RNase L. This chain is 2'-5'-oligoadenylate synthase 1A (Oas1a), found in Rattus norvegicus (Rat).